The chain runs to 85 residues: Small ribosomal subunit protein uS17 (85 aa).

The protein belongs to the universal ribosomal protein uS17 family. Part of the 30S ribosomal subunit.

Functionally, one of the primary rRNA binding proteins, it binds specifically to the 5'-end of 16S ribosomal RNA. The protein is Small ribosomal subunit protein uS17 of Spiroplasma citri.